Reading from the N-terminus, the 319-residue chain is ATP-dependent 6-phosphofructokinase (319 aa).

ATP is bound by residues Gly11, 72–73, and 102–105; these read RS and GDGS. Residue Asp103 coordinates Mg(2+). 126–128 contributes to the substrate binding site; the sequence is TID. Asp128 acts as the Proton acceptor in catalysis. Residue Arg155 participates in ADP binding. Substrate is bound by residues Arg163 and 170–172; that span reads MGR. Position 186–188 (186–188) interacts with ADP; sequence GAE. Substrate-binding positions include Glu223, Arg245, and 251 to 254; that span reads HTQR.

It belongs to the phosphofructokinase type A (PFKA) family. ATP-dependent PFK group I subfamily. Prokaryotic clade 'B1' sub-subfamily. As to quaternary structure, homotetramer. The cofactor is Mg(2+).

Its subcellular location is the cytoplasm. It carries out the reaction beta-D-fructose 6-phosphate + ATP = beta-D-fructose 1,6-bisphosphate + ADP + H(+). It functions in the pathway carbohydrate degradation; glycolysis; D-glyceraldehyde 3-phosphate and glycerone phosphate from D-glucose: step 3/4. Its activity is regulated as follows. Allosterically activated by ADP and other diphosphonucleosides, and allosterically inhibited by phosphoenolpyruvate. Its function is as follows. Catalyzes the phosphorylation of D-fructose 6-phosphate to fructose 1,6-bisphosphate by ATP, the first committing step of glycolysis. The chain is ATP-dependent 6-phosphofructokinase from Sulfurimonas denitrificans (strain ATCC 33889 / DSM 1251) (Thiomicrospira denitrificans (strain ATCC 33889 / DSM 1251)).